We begin with the raw amino-acid sequence, 373 residues long: Cobalt-precorrin-5B C(1)-methyltransferase (373 aa).

The protein belongs to the CbiD family.

The enzyme catalyses Co-precorrin-5B + S-adenosyl-L-methionine = Co-precorrin-6A + S-adenosyl-L-homocysteine. Its pathway is cofactor biosynthesis; adenosylcobalamin biosynthesis; cob(II)yrinate a,c-diamide from sirohydrochlorin (anaerobic route): step 6/10. Catalyzes the methylation of C-1 in cobalt-precorrin-5B to form cobalt-precorrin-6A. This Listeria monocytogenes serotype 4a (strain HCC23) protein is Cobalt-precorrin-5B C(1)-methyltransferase.